The chain runs to 38 residues: Photosystem II reaction center protein X (38 aa).

A helical membrane pass occupies residues 9-29 (IASLFAGAFIALAIGGVLVFI).

The protein belongs to the PsbX family. Type 1 subfamily. PSII is composed of 1 copy each of membrane proteins PsbA, PsbB, PsbC, PsbD, PsbE, PsbF, PsbH, PsbI, PsbJ, PsbK, PsbL, PsbM, PsbT, PsbX, PsbY, PsbZ, Psb30/Ycf12, at least 3 peripheral proteins of the oxygen-evolving complex and a large number of cofactors. It forms dimeric complexes.

It is found in the plastid. The protein resides in the chloroplast thylakoid membrane. Its function is as follows. Involved in the binding and/or turnover of quinones at the Q(B) site of photosystem II (PSII). PSII is a light-driven water plastoquinone oxidoreductase, using light energy to abstract electrons from H(2)O, generating a proton gradient subsequently used for ATP formation. This is Photosystem II reaction center protein X from Phaeodactylum tricornutum (strain CCAP 1055/1).